Here is a 188-residue protein sequence, read N- to C-terminus: MGSLKLSTVVVTALVVCLSILLISPTEAVEGKLKEECENVPYGFCPFWLFNPRSEELCKEKCKRFKSETSEYYGGFCTPNGPPGGVSLTATCNCCVREKVSPPEIEAVEGKLEVCDNLQIGMCLWYLWPWYDSTKRCEETCQKQNNSPSGARYRYYGGFCTPIVRGTGFFIHGACNCCIRDIKKQASS.

The N-terminal stretch at 1 to 28 is a signal peptide; the sequence is MGSLKLSTVVVTALVVCLSILLISPTEA. Intrachain disulfides connect Cys37–Cys95, Cys45–Cys77, Cys58–Cys92, Cys62–Cys94, Cys123–Cys178, Cys137–Cys175, and Cys141–Cys177.

It belongs to the DEFL family.

The protein resides in the secreted. The sequence is that of Defensin-like protein 99 from Arabidopsis thaliana (Mouse-ear cress).